The chain runs to 218 residues: Ribose-5-phosphate isomerase A (218 aa).

Substrate-binding positions include 28 to 31 (SGST), 81 to 84 (DGAD), and 94 to 97 (KGKG). The Proton acceptor role is filled by E103. Position 121 (K121) interacts with substrate.

Belongs to the ribose 5-phosphate isomerase family. As to quaternary structure, homodimer.

The catalysed reaction is aldehydo-D-ribose 5-phosphate = D-ribulose 5-phosphate. The protein operates within carbohydrate degradation; pentose phosphate pathway; D-ribose 5-phosphate from D-ribulose 5-phosphate (non-oxidative stage): step 1/1. In terms of biological role, catalyzes the reversible conversion of ribose-5-phosphate to ribulose 5-phosphate. The sequence is that of Ribose-5-phosphate isomerase A from Wigglesworthia glossinidia brevipalpis.